We begin with the raw amino-acid sequence, 1034 residues long: Error-prone DNA polymerase (1034 aa).

Belongs to the DNA polymerase type-C family. DnaE2 subfamily.

The protein resides in the cytoplasm. It catalyses the reaction DNA(n) + a 2'-deoxyribonucleoside 5'-triphosphate = DNA(n+1) + diphosphate. Functionally, DNA polymerase involved in damage-induced mutagenesis and translesion synthesis (TLS). It is not the major replicative DNA polymerase. The protein is Error-prone DNA polymerase of Pseudomonas fluorescens (strain ATCC BAA-477 / NRRL B-23932 / Pf-5).